The chain runs to 420 residues: Serine--tRNA ligase (420 aa).

225-227 (TLE) is a binding site for L-serine. 256–258 (RQE) contacts ATP. E279 contributes to the L-serine binding site. 343-346 (EVSS) lines the ATP pocket. Residue T379 coordinates L-serine.

Belongs to the class-II aminoacyl-tRNA synthetase family. Type-1 seryl-tRNA synthetase subfamily. As to quaternary structure, homodimer. The tRNA molecule binds across the dimer.

It is found in the cytoplasm. It catalyses the reaction tRNA(Ser) + L-serine + ATP = L-seryl-tRNA(Ser) + AMP + diphosphate + H(+). The enzyme catalyses tRNA(Sec) + L-serine + ATP = L-seryl-tRNA(Sec) + AMP + diphosphate + H(+). The protein operates within aminoacyl-tRNA biosynthesis; selenocysteinyl-tRNA(Sec) biosynthesis; L-seryl-tRNA(Sec) from L-serine and tRNA(Sec): step 1/1. Catalyzes the attachment of serine to tRNA(Ser). Is also able to aminoacylate tRNA(Sec) with serine, to form the misacylated tRNA L-seryl-tRNA(Sec), which will be further converted into selenocysteinyl-tRNA(Sec). This chain is Serine--tRNA ligase, found in Mycoplasma pneumoniae (strain ATCC 29342 / M129 / Subtype 1) (Mycoplasmoides pneumoniae).